Reading from the N-terminus, the 461-residue chain is RCC1-like G exchanging factor-like protein (461 aa).

Positions 1–10 (MLAAARALRG) are enriched in low complexity. Residues 1–34 (MLAAARALRGPRPRWPTPAREHWTPAGRSRSRRE) constitute a mitochondrion transit peptide. Residues 1-35 (MLAAARALRGPRPRWPTPAREHWTPAGRSRSRREA) are disordered. RCC1 repeat units follow at residues 55–121 (ADRV…LSSK), 125–188 (VTKV…VLTD), 190–244 (EGVF…FLTD), 245–297 (KGEV…ALSA), 298–350 (DGGV…VLNA), 352–408 (GHVF…ALTN), and 409–458 (KGEL…TLAK).

In terms of assembly, forms a regulatory protein-RNA complex, consisting of RCC1L, NGRN, RPUSD3, RPUSD4, TRUB2, FASTKD2 and 16S mt-rRNA. Interacts with 16S mt-rRNA; this interaction is direct. Interacts with OPA1; this interaction is direct. At E8.5, broadly expressed in yolk sac placenta, decidua, and embryo, with highest levels found in the trophoblast giant cells (TGCs) and ectoplacental cone (at protein level).

The protein localises to the mitochondrion inner membrane. Guanine nucleotide exchange factor (GEF) for mitochondrial dynamin-related GTPase OPA1. Activates OPA1, by exchanging bound GDP for free GTP, and drives OPA1 and MFN1-dependent mitochondrial fusion. Plays an essential role in mitochondrial ribosome biogenesis. As a component of a functional protein-RNA module, consisting of RCC1L, NGRN, RPUSD3, RPUSD4, TRUB2, FASTKD2 and 16S mitochondrial ribosomal RNA (16S mt-rRNA), controls 16S mt-rRNA abundance and is required for intra-mitochondrial translation of core subunits of the oxidative phosphorylation system. This chain is RCC1-like G exchanging factor-like protein, found in Mus musculus (Mouse).